The primary structure comprises 107 residues: Glutaredoxin 4 (107 aa).

The region spanning 4 to 106 is the Glutaredoxin domain; that stretch reads IDKIKQQINE…TLLKETATKH (103 aa). Residue Lys21 coordinates glutathione. Cys29 is a binding site for [2Fe-2S] cluster. Residues Arg58, Phe70, and 83–84 each bind glutathione; that span reads CD.

This sequence belongs to the glutaredoxin family. Monothiol subfamily. As to quaternary structure, homodimer.

It is found in the cytoplasm. Monothiol glutaredoxin involved in the biogenesis of iron-sulfur clusters. This Haemophilus ducreyi (strain 35000HP / ATCC 700724) protein is Glutaredoxin 4 (grxD).